The primary structure comprises 275 residues: Large ribosomal subunit protein uL2 (275 aa).

The disordered stretch occupies residues 224 to 251; it reads VMNPVDHPHGGGEGRSPIGRKAPVTPWG.

Belongs to the universal ribosomal protein uL2 family. As to quaternary structure, part of the 50S ribosomal subunit. Forms a bridge to the 30S subunit in the 70S ribosome.

Functionally, one of the primary rRNA binding proteins. Required for association of the 30S and 50S subunits to form the 70S ribosome, for tRNA binding and peptide bond formation. It has been suggested to have peptidyltransferase activity; this is somewhat controversial. Makes several contacts with the 16S rRNA in the 70S ribosome. The protein is Large ribosomal subunit protein uL2 of Heliobacterium modesticaldum (strain ATCC 51547 / Ice1).